We begin with the raw amino-acid sequence, 613 residues long: DNA repair and telomere maintenance protein nbs1 (613 aa).

Residues 23–86 (YIVGRNVSDD…FGTKVNEKVV (64 aa)) form the FHA domain. BRCT domains are found at residues 107-186 (FTIN…YLST) and 228-302 (GFSC…KIII). Ser355 bears the Phosphoserine mark. Disordered regions lie at residues 381–428 (KEPE…GQGK) and 546–613 (TEVF…KFHF). The segment covering 387 to 399 (LSNQSNNGSAQNK) has biased composition (polar residues). Residues 400–409 (KSGDNSEKTK) show a composition bias toward basic and acidic residues. Residues 574–592 (SSDKSGKSSISKKSSNSFK) show a composition bias toward low complexity. The short motif at 611–613 (FHF) is the FxF/Y motif element.

Belongs to the Nibrin family. As to quaternary structure, component of the MRN complex composed of two heterodimers rad32 and rad50 associated with a single nbs1. Interacts with (phosphorylated) ctp1/CtIP. Interacts (via FxF/Y motif) with tel1/atm.

It localises to the nucleus. The protein localises to the chromosome. Its subcellular location is the telomere. Functionally, component of the MRN complex, which plays a central role in double-strand break (DSB) repair, DNA recombination, maintenance of telomere integrity and meiosis. The MRN complex is involved in the repair of DNA double-strand breaks (DSBs) via homologous recombination (HR), an error-free mechanism which primarily occurs during S and G2 phases. The complex (1) mediates the end resection of damaged DNA, which generates proper single-stranded DNA, a key initial steps in HR, and is (2) required for the recruitment of other repair factors and efficient activation of tel1/atm upon DNA damage. The MRN complex possesses single-strand endonuclease activity and double-strand-specific 3'-5' exonuclease activity, which are provided by MRE11, to initiate end resection, which is required for single-strand invasion and recombination. Within the MRN complex, nbs1 acts as a protein-protein adapter, which specifically recognizes and binds phosphorylated proteins, promoting their recruitment to DNA damage sites. Recruits rad32 and rad50 components of the MRN complex to DSBs in response to DNA damage. Promotes the recruitment of tel1/atm to the DNA damage sites, activating tel1/atm function. Mediates the recruitment of phosphorylated ctp1/CtIP to DSBs, leading to cooperation between the MRN complex and ctp1/CtIP to initiate end resection. The chain is DNA repair and telomere maintenance protein nbs1 from Schizosaccharomyces pombe (strain 972 / ATCC 24843) (Fission yeast).